Here is a 245-residue protein sequence, read N- to C-terminus: tRNA pseudouridine synthase A (245 aa).

The active-site Nucleophile is Asp-52. Tyr-110 contacts substrate.

It belongs to the tRNA pseudouridine synthase TruA family. Homodimer.

The enzyme catalyses uridine(38/39/40) in tRNA = pseudouridine(38/39/40) in tRNA. Functionally, formation of pseudouridine at positions 38, 39 and 40 in the anticodon stem and loop of transfer RNAs. In Borrelia duttonii (strain Ly), this protein is tRNA pseudouridine synthase A.